Here is a 285-residue protein sequence, read N- to C-terminus: Bifunctional protein FolD (285 aa).

NADP(+)-binding positions include 165 to 167 (GRS), Ser-190, and Ile-231.

Belongs to the tetrahydrofolate dehydrogenase/cyclohydrolase family. As to quaternary structure, homodimer.

The enzyme catalyses (6R)-5,10-methylene-5,6,7,8-tetrahydrofolate + NADP(+) = (6R)-5,10-methenyltetrahydrofolate + NADPH. It catalyses the reaction (6R)-5,10-methenyltetrahydrofolate + H2O = (6R)-10-formyltetrahydrofolate + H(+). It participates in one-carbon metabolism; tetrahydrofolate interconversion. In terms of biological role, catalyzes the oxidation of 5,10-methylenetetrahydrofolate to 5,10-methenyltetrahydrofolate and then the hydrolysis of 5,10-methenyltetrahydrofolate to 10-formyltetrahydrofolate. The protein is Bifunctional protein FolD of Verminephrobacter eiseniae (strain EF01-2).